We begin with the raw amino-acid sequence, 817 residues long: Leucine--tRNA ligase (817 aa).

The 'HIGH' region motif lies at Pro40–His50. The 'KMSKS' region signature appears at Lys578–Ser582. Position 581 (Lys581) interacts with ATP.

It belongs to the class-I aminoacyl-tRNA synthetase family.

Its subcellular location is the cytoplasm. The catalysed reaction is tRNA(Leu) + L-leucine + ATP = L-leucyl-tRNA(Leu) + AMP + diphosphate. In Caldicellulosiruptor saccharolyticus (strain ATCC 43494 / DSM 8903 / Tp8T 6331), this protein is Leucine--tRNA ligase.